The chain runs to 367 residues: GTP cyclohydrolase FolE2 (367 aa).

This sequence belongs to the GTP cyclohydrolase IV family.

The enzyme catalyses GTP + H2O = 7,8-dihydroneopterin 3'-triphosphate + formate + H(+). The protein operates within cofactor biosynthesis; 7,8-dihydroneopterin triphosphate biosynthesis; 7,8-dihydroneopterin triphosphate from GTP: step 1/1. In terms of biological role, converts GTP to 7,8-dihydroneopterin triphosphate. In Roseobacter denitrificans (strain ATCC 33942 / OCh 114) (Erythrobacter sp. (strain OCh 114)), this protein is GTP cyclohydrolase FolE2.